The sequence spans 425 residues: Glutamyl-tRNA reductase (425 aa).

Substrate-binding positions include Thr49–Arg52, Ser107, Glu112–Gln114, and Gln118. The active-site Nucleophile is the Cys50. An NADP(+)-binding site is contributed by Gly187–Ile192.

The protein belongs to the glutamyl-tRNA reductase family. As to quaternary structure, homodimer.

It carries out the reaction (S)-4-amino-5-oxopentanoate + tRNA(Glu) + NADP(+) = L-glutamyl-tRNA(Glu) + NADPH + H(+). It participates in porphyrin-containing compound metabolism; protoporphyrin-IX biosynthesis; 5-aminolevulinate from L-glutamyl-tRNA(Glu): step 1/2. Functionally, catalyzes the NADPH-dependent reduction of glutamyl-tRNA(Glu) to glutamate 1-semialdehyde (GSA). The chain is Glutamyl-tRNA reductase from Pseudomonas putida (strain W619).